Here is a 247-residue protein sequence, read N- to C-terminus: Chalcone--flavanone isomerase (247 aa).

Residues threonine 56, asparagine 121, and serine 198 each coordinate substrate. Over residues 223–235 (ENKVEEDATKTDQ) the composition is skewed to basic and acidic residues. The segment at 223 to 247 (ENKVEEDATKTDQEEANDLSLAKEN) is disordered.

This sequence belongs to the chalcone isomerase family.

The enzyme catalyses a chalcone = a flavanone.. Its pathway is secondary metabolite biosynthesis; flavonoid biosynthesis. Functionally, catalyzes the intramolecular cyclization of bicyclic chalcones into tricyclic (S)-flavanones. Responsible for the isomerization of 4,2',4',6'-tetrahydroxychalcone (also termed chalcone) into naringenin. The sequence is that of Chalcone--flavanone isomerase (CHI) from Raphanus sativus (Radish).